The chain runs to 819 residues: Lon protease (819 aa).

Residues 1 to 14 (MNSTNNTDSQNLDP) show a composition bias toward polar residues. Residues 1-40 (MNSTNNTDSQNLDPNASEVEKLLDESAEAEEKVDDHTPPS) are disordered. Residues 18 to 38 (EVEKLLDESAEAEEKVDDHTP) show a composition bias toward basic and acidic residues. The Lon N-terminal domain maps to 42 to 239 (LFILPLNKRP…KALVLLKKEL (198 aa)). 392–399 (GPPGVGKT) contacts ATP. The Lon proteolytic domain maps to 634–818 (KTPVGVATGL…DDVFKIAFPG (185 aa)). Residues serine 724 and lysine 767 contribute to the active site.

It belongs to the peptidase S16 family. Homohexamer. Organized in a ring with a central cavity.

It localises to the cytoplasm. It catalyses the reaction Hydrolysis of proteins in presence of ATP.. Functionally, ATP-dependent serine protease that mediates the selective degradation of mutant and abnormal proteins as well as certain short-lived regulatory proteins. Required for cellular homeostasis and for survival from DNA damage and developmental changes induced by stress. Degrades polypeptides processively to yield small peptide fragments that are 5 to 10 amino acids long. Binds to DNA in a double-stranded, site-specific manner. The polypeptide is Lon protease (Chlamydia trachomatis serovar D (strain ATCC VR-885 / DSM 19411 / UW-3/Cx)).